We begin with the raw amino-acid sequence, 118 residues long: Waprin-Enh1 (118 aa).

The N-terminal stretch at 1-24 (MKTLTGLLLVGLLALWIGLPSTSS) is a signal peptide. WAP domains are found at residues 25 to 72 (KILF…RSCR) and 74 to 118 (PPVL…RICK). Disulfide bonds link Cys30–Cys63, Cys40–Cys67, Cys50–Cys62, Cys56–Cys71, Cys81–Cys109, Cys88–Cys113, Cys96–Cys108, and Cys102–Cys117.

Belongs to the venom waprin family. As to expression, expressed by the venom gland.

The protein localises to the secreted. Damages membranes of susceptible bacteria. Has no hemolytic activity. Not toxic to mice. Does not inhibit the proteinases elastase and cathepsin G. The polypeptide is Waprin-Enh1 (Pseudoferania polylepis (Macleay's water snake)).